A 512-amino-acid chain; its full sequence is Ferrochelatase-2, chloroplastic (512 aa).

The tract at residues 1–32 is disordered; it reads MNCPAMTASPSSSSSSSYSTFRPPPPLLPQLS. Residues 1 to 83 constitute a chloroplast transit peptide; sequence MNCPAMTASP…SNPLNISSSS (83 aa). The span at 9 to 21 shows a compositional bias: low complexity; it reads SPSSSSSSSYSTF. The residue at position 84 (Val-84) is an N-acetylvaline.

Belongs to the ferrochelatase family. Expressed in leaves and flowers.

It localises to the plastid. The protein localises to the chloroplast membrane. It is found in the chloroplast thylakoid membrane. The catalysed reaction is heme b + 2 H(+) = protoporphyrin IX + Fe(2+). Its pathway is porphyrin-containing compound metabolism; protoheme biosynthesis; protoheme from protoporphyrin-IX: step 1/1. Its function is as follows. Catalyzes the last step of heme biosynthesis by inserting ferrous iron into protoporphyrin IX to produce protoheme. Produces heme for photosynthetic cytochromes, and for proteins involved in abiotic and biotic stress responses. May play a role in the quality control of individual chloroplasts during photo-oxidative stress through regulation of heme biosynthesis. The protein is Ferrochelatase-2, chloroplastic of Arabidopsis thaliana (Mouse-ear cress).